The primary structure comprises 218 residues: PKHD-type hydroxylase IL0759 (218 aa).

Residues Q76–S170 enclose the Fe2OG dioxygenase domain. The Fe cation site is built by H94, D96, and H151. R161 serves as a coordination point for 2-oxoglutarate.

It depends on Fe(2+) as a cofactor. L-ascorbate is required as a cofactor.

The protein is PKHD-type hydroxylase IL0759 of Idiomarina loihiensis (strain ATCC BAA-735 / DSM 15497 / L2-TR).